The chain runs to 306 residues: Oligopeptide transport system permease protein OppB (306 aa).

At 1 to 12 (MLKFILRRCLEA) the chain is on the cytoplasmic side. The chain crosses the membrane as a helical span at residues 13–30 (IPTLFILITISFFMMRLA). Topologically, residues 31-101 (PGSPFTGERA…ASFPVSAKLG (71 aa)) are periplasmic. The ABC transmembrane type-1 domain maps to 94–293 (FPVSAKLGAA…ALTILFNAIV (200 aa)). Residues 102–121 (AAAFLLAVIIGVSAGVIAAL) form a helical membrane-spanning segment. Over 122 to 133 (KQNTRWDYTVMG) the chain is Cytoplasmic. Residues 134-156 (FAMTGVVIPSFVVAPLLVMVFAI) form a helical membrane-spanning segment. Topologically, residues 157–165 (TLQWLPGGG) are periplasmic. A helical transmembrane segment spans residues 166-188 (WNGGALKFMILPMVALSLAYIAS). At 189-227 (IARITRGSMIEVLHSNFIRTARAKGLPMRRIIFRHALKP) the chain is on the cytoplasmic side. The chain crosses the membrane as a helical span at residues 228–250 (ALLPVLSYMGPAFVGIITGSMVI). Residues 251–277 (ETIYGLPGIGQLFVNGALNRDYSLVLS) lie on the Periplasmic side of the membrane. Residues 278–300 (LTILVGALTILFNAIVDVLYAVI) traverse the membrane as a helical segment. Residues 301–306 (DPKIRY) lie on the Cytoplasmic side of the membrane.

The protein belongs to the binding-protein-dependent transport system permease family. OppBC subfamily. In terms of assembly, the complex is composed of two ATP-binding proteins (OppD and OppF), two transmembrane proteins (OppB and OppC) and a solute-binding protein (OppA).

The protein resides in the cell inner membrane. Its function is as follows. Part of the ABC transporter complex OppABCDF involved in the uptake of oligopeptides, including the cell wall murein tripeptide L-alanyl-gamma-D-glutamyl-meso-diaminopimelate. Responsible for the translocation of the substrate across the membrane. Plays an important nutritional role and is involved in the recycling of cell wall peptides. In Salmonella typhimurium (strain LT2 / SGSC1412 / ATCC 700720), this protein is Oligopeptide transport system permease protein OppB.